We begin with the raw amino-acid sequence, 156 residues long: Nuclear cap-binding protein subunit 2 (156 aa).

At serine 2 the chain carries N-acetylserine. Serine 13 and serine 18 each carry phosphoserine. Residues tyrosine 20, tyrosine 43, 112–116, 123–127, and 133–134 each bind mRNA; these read RTDWD, RQYGR, and QV. An RRM domain is found at 40 to 118; that stretch reads CTLYVGNLSF…RIIRTDWDAG (79 aa). Residues 124-156 form a disordered region; that stretch reads QYGRGRSGGQVRDEYREDYDAGRGGYGKLAQKQ. The span at 134–144 shows a compositional bias: basic and acidic residues; sequence VRDEYREDYDA. At arginine 146 the chain carries Omega-N-methylarginine.

It belongs to the RRM NCBP2 family. As to quaternary structure, component of the nuclear cap-binding complex (CBC), a heterodimer composed of NCBP1/CBP80 and NCBP2/CBP20 that interacts with m7GpppG-capped RNA. Found in a U snRNA export complex with PHAX/RNUXA, NCBP1/CBP80, NCBP2/CBP20, RAN, XPO1 and m7G-capped RNA. Interacts with PHAX/RNUXA, EIF4G1, HNRNPF, HNRNPH1 and ALYREF/THOC4/ALY. Interacts with SRRT/ARS2 and KPNA3.

It localises to the nucleus. The protein localises to the cytoplasm. Its function is as follows. Component of the cap-binding complex (CBC), which binds co-transcriptionally to the 5' cap of pre-mRNAs and is involved in various processes such as pre-mRNA splicing, translation regulation, nonsense-mediated mRNA decay, RNA-mediated gene silencing (RNAi) by microRNAs (miRNAs) and mRNA export. The CBC complex is involved in mRNA export from the nucleus via its interaction with ALYREF/THOC4/ALY, leading to the recruitment of the mRNA export machinery to the 5' end of mRNA and to mRNA export in a 5' to 3' direction through the nuclear pore. The CBC complex is also involved in mediating U snRNA and intronless mRNAs export from the nucleus. The CBC complex is essential for a pioneer round of mRNA translation, before steady state translation when the CBC complex is replaced by cytoplasmic cap-binding protein eIF4E. The pioneer round of mRNA translation mediated by the CBC complex plays a central role in nonsense-mediated mRNA decay (NMD), NMD only taking place in mRNAs bound to the CBC complex, but not on eIF4E-bound mRNAs. The CBC complex enhances NMD in mRNAs containing at least one exon-junction complex (EJC) via its interaction with UPF1, promoting the interaction between UPF1 and UPF2. The CBC complex is also involved in 'failsafe' NMD, which is independent of the EJC complex, while it does not participate in Staufen-mediated mRNA decay (SMD). During cell proliferation, the CBC complex is also involved in microRNAs (miRNAs) biogenesis via its interaction with SRRT/ARS2, thereby being required for miRNA-mediated RNA interference. The CBC complex also acts as a negative regulator of PARN, thereby acting as an inhibitor of mRNA deadenylation. In the CBC complex, NCBP2/CBP20 recognizes and binds capped RNAs (m7GpppG-capped RNA) but requires NCBP1/CBP80 to stabilize the movement of its N-terminal loop and lock the CBC into a high affinity cap-binding state with the cap structure. The conventional cap-binding complex with NCBP2 binds both small nuclear RNA (snRNA) and messenger (mRNA) and is involved in their export from the nucleus. In Mus musculus (Mouse), this protein is Nuclear cap-binding protein subunit 2 (Ncbp2).